The primary structure comprises 30 residues: Cycloviolin-D (30 aa).

The cyclopeptide (Gly-Asn) cross-link spans 1 to 30 (GFPCGESCVFIPCISAAIGCSCKNKVCYRN). Intrachain disulfides connect C4–C20, C8–C22, and C13–C27.

In terms of processing, this is a cyclic peptide.

Its function is as follows. Probably participates in a plant defense mechanism. Has anti-HIV activity. The protein is Cycloviolin-D of Leonia cymosa (Sacha uba).